The chain runs to 513 residues: Na(+)/H(+) antiporter NhaB (513 aa).

The next 12 membrane-spanning stretches (helical) occupy residues 21-41, 64-84, 88-108, 119-139, 143-163, 202-222, 243-263, 299-318, 322-344, 350-370, 389-409, and 477-497; these read ICIIAFLVINPLIYFFISPFV, QPGGLLAIEAVFIGMTSAHHV, IMANFEVILLLMFMVAGIYFM, LLIVIHSKKILSLAFCLSATF, FLDALTVIAVIISVGTGFYGV, LLMHAAVGSALGGVMTMVGEP, LPVSLPVLICGVITCLLLEHF, MGIQALAGIWLVVGLALHLA, IIGLTIIIICTAFCGITDEHAIG, PMPFTALIVVFFTVVAVIVDL, LALFYVFNGLLSMISDNVFVG, and MALPYTIVLSIIGFLSLEFLL.

Belongs to the NhaB Na(+)/H(+) (TC 2.A.34) antiporter family.

The protein localises to the cell inner membrane. The enzyme catalyses 2 Na(+)(in) + 3 H(+)(out) = 2 Na(+)(out) + 3 H(+)(in). Its function is as follows. Na(+)/H(+) antiporter that extrudes sodium in exchange for external protons. In Actinobacillus pleuropneumoniae serotype 3 (strain JL03), this protein is Na(+)/H(+) antiporter NhaB.